Consider the following 139-residue polypeptide: Deoxyuridine 5'-triphosphate nucleotidohydrolase (139 aa).

Substrate is bound by residues 58–60 (RSG), Asn71, 75–77 (LID), and Met85.

Belongs to the dUTPase family. The cofactor is Mg(2+).

The catalysed reaction is dUTP + H2O = dUMP + diphosphate + H(+). Its pathway is pyrimidine metabolism; dUMP biosynthesis; dUMP from dCTP (dUTP route): step 2/2. Its function is as follows. This enzyme is involved in nucleotide metabolism: it produces dUMP, the immediate precursor of thymidine nucleotides and it decreases the intracellular concentration of dUTP so that uracil cannot be incorporated into DNA. This chain is Deoxyuridine 5'-triphosphate nucleotidohydrolase, found in Gamma-proteobacterium EBAC31A08.